Here is a 257-residue protein sequence, read N- to C-terminus: Imidazole glycerol phosphate synthase subunit HisF (257 aa).

Active-site residues include Asp-11 and Asp-130.

The protein belongs to the HisA/HisF family. In terms of assembly, heterodimer of HisH and HisF.

The protein localises to the cytoplasm. The enzyme catalyses 5-[(5-phospho-1-deoxy-D-ribulos-1-ylimino)methylamino]-1-(5-phospho-beta-D-ribosyl)imidazole-4-carboxamide + L-glutamine = D-erythro-1-(imidazol-4-yl)glycerol 3-phosphate + 5-amino-1-(5-phospho-beta-D-ribosyl)imidazole-4-carboxamide + L-glutamate + H(+). Its pathway is amino-acid biosynthesis; L-histidine biosynthesis; L-histidine from 5-phospho-alpha-D-ribose 1-diphosphate: step 5/9. IGPS catalyzes the conversion of PRFAR and glutamine to IGP, AICAR and glutamate. The HisF subunit catalyzes the cyclization activity that produces IGP and AICAR from PRFAR using the ammonia provided by the HisH subunit. In Shewanella sp. (strain ANA-3), this protein is Imidazole glycerol phosphate synthase subunit HisF.